The following is a 527-amino-acid chain: ATP synthase subunit alpha (527 aa).

Gly172–Thr179 contributes to the ATP binding site.

It belongs to the ATPase alpha/beta chains family. As to quaternary structure, F-type ATPases have 2 components, CF(1) - the catalytic core - and CF(0) - the membrane proton channel. CF(1) has five subunits: alpha(3), beta(3), gamma(1), delta(1), epsilon(1). CF(0) has three main subunits: a(1), b(2) and c(9-12). The alpha and beta chains form an alternating ring which encloses part of the gamma chain. CF(1) is attached to CF(0) by a central stalk formed by the gamma and epsilon chains, while a peripheral stalk is formed by the delta and b chains.

It localises to the cell inner membrane. It catalyses the reaction ATP + H2O + 4 H(+)(in) = ADP + phosphate + 5 H(+)(out). In terms of biological role, produces ATP from ADP in the presence of a proton gradient across the membrane. The alpha chain is a regulatory subunit. The protein is ATP synthase subunit alpha of Bacteroides fragilis (strain ATCC 25285 / DSM 2151 / CCUG 4856 / JCM 11019 / LMG 10263 / NCTC 9343 / Onslow / VPI 2553 / EN-2).